A 459-amino-acid chain; its full sequence is Heat stress transcription factor A-4d (459 aa).

Positions 127–189 form a coiled coil; it reads AESERRELEE…QKNIVASLCE (63 aa). The segment at 141–191 is hydrophobic repeat HR-A/B; the sequence is LKYEKSILVADLQRQNQQQYVINWQMQAMEGRLVAMEQRQKNIVASLCEML. The Nuclear localization signal motif lies at 209 to 213; sequence SKKRR. Over residues 364–388 the composition is skewed to polar residues; it reads YPTQADVNSEIASSTDTSQDGTSET. The disordered stretch occupies residues 364 to 398; the sequence is YPTQADVNSEIASSTDTSQDGTSETEASHGPTNDV. An AHA motif is present at residues 397-406; the sequence is DVFWERFLTE.

The protein belongs to the HSF family. Class A subfamily. In terms of assembly, homotrimer. In terms of processing, exhibits temperature-dependent phosphorylation.

Its subcellular location is the nucleus. Transcriptional regulator that specifically binds DNA of heat shock promoter elements (HSE). The sequence is that of Heat stress transcription factor A-4d (HSFA4D) from Oryza sativa subsp. japonica (Rice).